The sequence spans 100 residues: Small ribosomal subunit protein uS14c (100 aa).

It belongs to the universal ribosomal protein uS14 family. Part of the 30S ribosomal subunit.

The protein resides in the plastid. It is found in the chloroplast. Binds 16S rRNA, required for the assembly of 30S particles. The chain is Small ribosomal subunit protein uS14c from Angiopteris evecta (Mule's foot fern).